Reading from the N-terminus, the 275-residue chain is Nitrogenase iron protein 1 (275 aa).

9–16 (GKGGIGKS) lines the ATP pocket. Residue Cys97 coordinates [4Fe-4S] cluster. The residue at position 100 (Arg100) is an ADP-ribosylarginine; by dinitrogenase reductase ADP-ribosyltransferase. Residue Cys132 participates in [4Fe-4S] cluster binding.

This sequence belongs to the NifH/BchL/ChlL family. Homodimer. [4Fe-4S] cluster is required as a cofactor. The reversible ADP-ribosylation of Arg-100 inactivates the nitrogenase reductase and regulates nitrogenase activity.

It carries out the reaction N2 + 8 reduced [2Fe-2S]-[ferredoxin] + 16 ATP + 16 H2O = H2 + 8 oxidized [2Fe-2S]-[ferredoxin] + 2 NH4(+) + 16 ADP + 16 phosphate + 6 H(+). In terms of biological role, the key enzymatic reactions in nitrogen fixation are catalyzed by the nitrogenase complex, which has 2 components: the iron protein and the molybdenum-iron protein. This chain is Nitrogenase iron protein 1 (nifH1), found in Methanothermobacter thermautotrophicus (strain ATCC 29096 / DSM 1053 / JCM 10044 / NBRC 100330 / Delta H) (Methanobacterium thermoautotrophicum).